A 307-amino-acid polypeptide reads, in one-letter code: Transcription initiation factor IIB (307 aa).

Residues 11 to 42 (FTEECPACGSAEIVFDEERGEYVCANCGLVTE) form a TFIIB-type zinc finger. C15, C18, C34, and C37 together coordinate Zn(2+). The segment at 48 to 69 (PGPEWRHFNPDQRQRRSRTGEP) is disordered. Over residues 50–69 (PEWRHFNPDQRQRRSRTGEP) the composition is skewed to basic and acidic residues. 2 repeat units span residues 123–207 (LELE…QRRL) and 218–299 (DHLP…EICE).

This sequence belongs to the TFIIB family.

Functionally, stabilizes TBP binding to an archaeal box-A promoter. Also responsible for recruiting RNA polymerase II to the pre-initiation complex (DNA-TBP-TFIIB). The polypeptide is Transcription initiation factor IIB (Methanopyrus kandleri (strain AV19 / DSM 6324 / JCM 9639 / NBRC 100938)).